Reading from the N-terminus, the 492-residue chain is MTDLTSLTLAEARDGLANKSFTAVELTDAHLAAIEAARVLNAYVLETPDQARQMAKAADAQIAKGEGGPLAGLPLGIKDLFATKGERTTACSKILGDFKPTYESTVTTQLWRDGAVLLGKLNNDEFAMGSSNETSCFGPVINPWRRAGSDAKLVPGGSSGGSAAAVAAGLCLGATATDTGGSIRQPAAFTGTVGIKPTYGRCSRWGIVAFASSLDQAGPIARTVRDSAILLRSMAGHDPKDTTSVDRPVPNYEAAVGGSVKGMKIGIPKEYRLDGMPAEIEKLWSQGAEWLKAAGAELVEVSLPHTKYALPAYYIVAPAEASSNLARYDGVRYGARVNGRNIIEMYENTRAAGFGAEVKRRIMIGTYVLSAGYYDAYYLRAQKVRTLIKRDFEQCFDQGVSAILTPATPSAAFGIGEKGGADPVEMYLNDIFTVTVNMAGLPGIAVPAGSDSQGLPLGLQLIGRPFDEDTLFSLGEVIEQAAGRFTPAKWWA.

Residues lysine 78 and serine 158 each act as charge relay system in the active site. Serine 182 serves as the catalytic Acyl-ester intermediate.

The protein belongs to the amidase family. GatA subfamily. Heterotrimer of A, B and C subunits.

It carries out the reaction L-glutamyl-tRNA(Gln) + L-glutamine + ATP + H2O = L-glutaminyl-tRNA(Gln) + L-glutamate + ADP + phosphate + H(+). Functionally, allows the formation of correctly charged Gln-tRNA(Gln) through the transamidation of misacylated Glu-tRNA(Gln) in organisms which lack glutaminyl-tRNA synthetase. The reaction takes place in the presence of glutamine and ATP through an activated gamma-phospho-Glu-tRNA(Gln). The sequence is that of Glutamyl-tRNA(Gln) amidotransferase subunit A from Rhodopseudomonas palustris (strain ATCC BAA-98 / CGA009).